Here is a 336-residue protein sequence, read N- to C-terminus: MQEMKPAALSGSNGLNGASGSSVRVPCSRLSRAGRMALDLQSKCAAYVLALRPWSFSASLTPVALGSALAYKLEGSVDLLLLLVCAVAVLLVHGAGNLVNTYYDFSKGIDHKKSDDRTLVDQILKPQDVVMFGAVLYSAGCLCATLLYFLSSLKLEHLALIYFGGLSSSFLYTGGIGLKYVALGDVVILITFGPLAVMFAHAVQVGYLSVLPLVYAVPLALNTEAILHSNNTRDMDSDKQAGIVTLAILLGPTLSYVIYNLLLFVPYLLFCILATRYTISMALPLLTLPMAFPLERQFRCRCYAKIPQKTAKLNLLMGLFYVFGIILAPQGSLPLL.

The interval 1–22 (MQEMKPAALSGSNGLNGASGSS) is disordered. Residues 7–22 (AALSGSNGLNGASGSS) are compositionally biased toward low complexity. Transmembrane regions (helical) follow at residues 79-99 (LLLL…GNLV), 129-149 (VVMF…LLYF), 158-178 (LALI…GIGL), 180-200 (YVAL…VMFA), 201-221 (HAVQ…PLAL), 254-274 (LSYV…CILA), and 315-335 (LLMG…SLPL).

This sequence belongs to the UbiA prenyltransferase family.

The protein localises to the endoplasmic reticulum membrane. It localises to the golgi apparatus membrane. It is found in the mitochondrion membrane. It catalyses the reaction menadiol + (2E,6E,10E)-geranylgeranyl diphosphate = menaquinol-4 + diphosphate. The catalysed reaction is all-trans-decaprenyl diphosphate + 4-hydroxybenzoate = 4-hydroxy-3-(all-trans-decaprenyl)benzoate + diphosphate. Its pathway is quinol/quinone metabolism; menaquinone biosynthesis. It functions in the pathway cofactor biosynthesis; ubiquinone biosynthesis. Functionally, prenyltransferase that mediates the formation of menaquinone-4 (MK-4) and coenzyme Q10. MK-4 is a vitamin K2 isoform required for endothelial cell development. Mediates the conversion of phylloquinone (PK) into MK-4, probably by cleaving the side chain of phylloquinone (PK) to release 2-methyl-1,4-naphthoquinone (menadione; K3) and then prenylating it with geranylgeranyl pyrophosphate (GGPP) to form MK-4. Also plays a role in cardiovascular development independently of MK-4 biosynthesis, by acting as a coenzyme Q10 biosynthetic enzyme: coenzyme Q10, also named ubiquinone, plays an important antioxidant role in the cardiovascular system. Mediates biosynthesis of coenzyme Q10 in the Golgi membrane, leading to protect cardiovascular tissues from nos3/eNOS-dependent oxidative stress. The chain is UbiA prenyltransferase domain-containing protein 1 (ubiad1) from Danio rerio (Zebrafish).